A 225-amino-acid polypeptide reads, in one-letter code: Uridylate kinase (225 aa).

ATP is bound at residue 9–10; that stretch reads GS. Position 46 (glycine 46) interacts with UMP. Glycine 47 and arginine 51 together coordinate ATP. UMP is bound by residues aspartate 67 and 115–121; that span reads THPAHTT. ATP is bound by residues threonine 141, asparagine 142, tyrosine 147, and aspartate 150.

This sequence belongs to the UMP kinase family. In terms of assembly, homohexamer.

It localises to the cytoplasm. It catalyses the reaction UMP + ATP = UDP + ADP. Its pathway is pyrimidine metabolism; CTP biosynthesis via de novo pathway; UDP from UMP (UMPK route): step 1/1. Its activity is regulated as follows. Inhibited by UTP. Functionally, catalyzes the reversible phosphorylation of UMP to UDP. The chain is Uridylate kinase from Methanococcus aeolicus (strain ATCC BAA-1280 / DSM 17508 / OCM 812 / Nankai-3).